The sequence spans 292 residues: 2-(5''-triphosphoribosyl)-3'-dephosphocoenzyme-A synthase (292 aa).

Belongs to the CitG/MdcB family.

The enzyme catalyses 3'-dephospho-CoA + ATP = 2'-(5''-triphospho-alpha-D-ribosyl)-3'-dephospho-CoA + adenine. Functionally, catalyzes the formation of 2-(5''-triphosphoribosyl)-3'-dephosphocoenzyme-A, the precursor of the prosthetic group of the holo-acyl carrier protein (gamma chain) of citrate lyase, from ATP and dephospho-CoA. This chain is 2-(5''-triphosphoribosyl)-3'-dephosphocoenzyme-A synthase, found in Escherichia coli O7:K1 (strain IAI39 / ExPEC).